The following is a 381-amino-acid chain: Protein kinase gsk31 (381 aa).

The region spanning Tyr25–Phe309 is the Protein kinase domain. Residues Leu31–Val39 and Lys54 each bind ATP. Asp150 acts as the Proton acceptor in catalysis. Ser184 is modified (phosphoserine). Tyr185 is modified (phosphotyrosine).

The protein belongs to the protein kinase superfamily. CMGC Ser/Thr protein kinase family. GSK-3 subfamily.

It catalyses the reaction L-seryl-[protein] + ATP = O-phospho-L-seryl-[protein] + ADP + H(+). The catalysed reaction is L-threonyl-[protein] + ATP = O-phospho-L-threonyl-[protein] + ADP + H(+). This chain is Protein kinase gsk31 (gsk31), found in Schizosaccharomyces pombe (strain 972 / ATCC 24843) (Fission yeast).